A 430-amino-acid chain; its full sequence is Phosphomethylpyrimidine synthase (430 aa).

Substrate contacts are provided by residues N68, M96, Y125, H164, 186–188 (SRG), 227–230 (DALR), and E266. H270 contributes to the Zn(2+) binding site. Y293 is a substrate binding site. H334 contacts Zn(2+). C410, C413, and C417 together coordinate [4Fe-4S] cluster.

This sequence belongs to the ThiC family. It depends on [4Fe-4S] cluster as a cofactor.

It catalyses the reaction 5-amino-1-(5-phospho-beta-D-ribosyl)imidazole + S-adenosyl-L-methionine = 4-amino-2-methyl-5-(phosphooxymethyl)pyrimidine + CO + 5'-deoxyadenosine + formate + L-methionine + 3 H(+). Its pathway is cofactor biosynthesis; thiamine diphosphate biosynthesis. Functionally, catalyzes the synthesis of the hydroxymethylpyrimidine phosphate (HMP-P) moiety of thiamine from aminoimidazole ribotide (AIR) in a radical S-adenosyl-L-methionine (SAM)-dependent reaction. This Pyrobaculum aerophilum (strain ATCC 51768 / DSM 7523 / JCM 9630 / CIP 104966 / NBRC 100827 / IM2) protein is Phosphomethylpyrimidine synthase.